A 482-amino-acid chain; its full sequence is tRNA sulfurtransferase (482 aa).

Residues 61–165 (LAIRDALTRI…DDRLLLIKGR (105 aa)) enclose the THUMP domain. ATP-binding positions include 183–184 (LI), Lys-265, Gly-287, and Gln-296. Cys-344 and Cys-456 are joined by a disulfide. The region spanning 404-482 (FGPNDVILDI…GFANVKVYRP (79 aa)) is the Rhodanese domain. Cys-456 acts as the Cysteine persulfide intermediate in catalysis.

It belongs to the ThiI family.

The protein localises to the cytoplasm. The enzyme catalyses [ThiI sulfur-carrier protein]-S-sulfanyl-L-cysteine + a uridine in tRNA + 2 reduced [2Fe-2S]-[ferredoxin] + ATP + H(+) = [ThiI sulfur-carrier protein]-L-cysteine + a 4-thiouridine in tRNA + 2 oxidized [2Fe-2S]-[ferredoxin] + AMP + diphosphate. The catalysed reaction is [ThiS sulfur-carrier protein]-C-terminal Gly-Gly-AMP + S-sulfanyl-L-cysteinyl-[cysteine desulfurase] + AH2 = [ThiS sulfur-carrier protein]-C-terminal-Gly-aminoethanethioate + L-cysteinyl-[cysteine desulfurase] + A + AMP + 2 H(+). It functions in the pathway cofactor biosynthesis; thiamine diphosphate biosynthesis. Functionally, catalyzes the ATP-dependent transfer of a sulfur to tRNA to produce 4-thiouridine in position 8 of tRNAs, which functions as a near-UV photosensor. Also catalyzes the transfer of sulfur to the sulfur carrier protein ThiS, forming ThiS-thiocarboxylate. This is a step in the synthesis of thiazole, in the thiamine biosynthesis pathway. The sulfur is donated as persulfide by IscS. This is tRNA sulfurtransferase from Salmonella choleraesuis (strain SC-B67).